The chain runs to 193 residues: dCTP deaminase (193 aa).

DCTP contacts are provided by residues 110–115 (RSSLAR), D128, 136–138 (VLE), Y171, K178, and Q182. Residue E138 is the Proton donor/acceptor of the active site.

Belongs to the dCTP deaminase family. In terms of assembly, homotrimer.

It carries out the reaction dCTP + H2O + H(+) = dUTP + NH4(+). It participates in pyrimidine metabolism; dUMP biosynthesis; dUMP from dCTP (dUTP route): step 1/2. Catalyzes the deamination of dCTP to dUTP. This is dCTP deaminase from Buchnera aphidicola subsp. Baizongia pistaciae (strain Bp).